The following is an 879-amino-acid chain: Alanine--tRNA ligase (879 aa).

Zn(2+) is bound by residues H566, H570, C668, and H672.

It belongs to the class-II aminoacyl-tRNA synthetase family. The cofactor is Zn(2+).

The protein localises to the cytoplasm. The catalysed reaction is tRNA(Ala) + L-alanine + ATP = L-alanyl-tRNA(Ala) + AMP + diphosphate. Functionally, catalyzes the attachment of alanine to tRNA(Ala) in a two-step reaction: alanine is first activated by ATP to form Ala-AMP and then transferred to the acceptor end of tRNA(Ala). Also edits incorrectly charged Ser-tRNA(Ala) and Gly-tRNA(Ala) via its editing domain. The polypeptide is Alanine--tRNA ligase (Listeria monocytogenes serotype 4b (strain F2365)).